The primary structure comprises 390 residues: MKRVAILGSTGSIGVQALDVVGRFPDRFEVVGLAAGRNAPRLLEQIRRFRPRVVSVCDEAAARAVRAEAPPGTEVLSGDAGAVAVASHPDAAFVLAAISGGAGLRSTAAAIEAGKPVGLANKESMVLAGELLMARAAAKGVAILPVDSEHSAIHQSLVGHNRGEVRRLILTASGGPLRCTPEAELATVTPERALKHPNWSMGDKITIDSATLMNKGLEVIEARWLFGVEQQRIDIVVHPESVVHSMVEYVDGSIVAQLGISDMRGPISYAMGHPERMPLDLPPLDLGRLGKLTFEPPDPARFPAYTLAYRALELGGTAPAVLSGADEAAVAAFLARRCSFTEIAEVCADVLEAHVVEPVRSVEQALAASEHGRREAEKRVGARAHAPASR.

NADPH-binding residues include Thr-10, Gly-11, Ser-12, Ile-13, Gly-36, Arg-37, Asn-38, and Asn-121. Lys-122 contacts 1-deoxy-D-xylulose 5-phosphate. Residue Glu-123 coordinates NADPH. Asp-147 is a binding site for Mn(2+). The 1-deoxy-D-xylulose 5-phosphate site is built by Ser-148, Glu-149, Ser-173, and His-196. Glu-149 provides a ligand contact to Mn(2+). Gly-202 lines the NADPH pocket. 1-deoxy-D-xylulose 5-phosphate is bound by residues Ser-209, Asn-214, Lys-215, and Glu-218. Glu-218 provides a ligand contact to Mn(2+). A disordered region spans residues 367–390 (AASEHGRREAEKRVGARAHAPASR). A compositionally biased stretch (basic and acidic residues) spans 370-380 (EHGRREAEKRV).

This sequence belongs to the DXR family. Requires Mg(2+) as cofactor. It depends on Mn(2+) as a cofactor.

The enzyme catalyses 2-C-methyl-D-erythritol 4-phosphate + NADP(+) = 1-deoxy-D-xylulose 5-phosphate + NADPH + H(+). It participates in isoprenoid biosynthesis; isopentenyl diphosphate biosynthesis via DXP pathway; isopentenyl diphosphate from 1-deoxy-D-xylulose 5-phosphate: step 1/6. In terms of biological role, catalyzes the NADPH-dependent rearrangement and reduction of 1-deoxy-D-xylulose-5-phosphate (DXP) to 2-C-methyl-D-erythritol 4-phosphate (MEP). The protein is 1-deoxy-D-xylulose 5-phosphate reductoisomerase of Anaeromyxobacter dehalogenans (strain 2CP-1 / ATCC BAA-258).